The chain runs to 119 residues: UPF0344 protein lp_1373 (119 aa).

4 helical membrane-spanning segments follow: residues Met1 to Leu21, Phe32 to Ile52, Trp60 to Phe80, and Leu92 to Trp112.

It belongs to the UPF0344 family.

The protein resides in the cell membrane. This is UPF0344 protein lp_1373 from Lactiplantibacillus plantarum (strain ATCC BAA-793 / NCIMB 8826 / WCFS1) (Lactobacillus plantarum).